The primary structure comprises 249 residues: 2-dehydro-3-deoxy-L-rhamnonate dehydrogenase (NAD(+)) (249 aa).

Residue Tyr156 is the Proton acceptor of the active site.

Belongs to the short-chain dehydrogenases/reductases (SDR) family. In terms of assembly, homotetramer.

It catalyses the reaction 2-dehydro-3-deoxy-L-rhamnonate + NAD(+) = 2,4-didehydro-3-deoxy-L-rhamnonate + NADH + H(+). The protein operates within carbohydrate degradation; L-rhamnose degradation. Its function is as follows. Catalyzes the NAD(+)-dependent dehydrogenation of 2-dehydro-3-deoxy-L-rhamnonate to form 2,4-didehydro-3-deoxy-L-rhamnonate. Does not show any detectable activity in the presence of NADP(+). Catalyzes the fourth step in an alternative pathway for rhamnose utilization that does not involve phosphorylated intermediates. This is 2-dehydro-3-deoxy-L-rhamnonate dehydrogenase (NAD(+)) from Sphingomonas sp. (strain SKA58).